Reading from the N-terminus, the 186-residue chain is Translation initiation factor IF-3 (186 aa).

The interval 1–20 is disordered; sequence MINRNSGKDRDRSRSGDKEL.

This sequence belongs to the IF-3 family. In terms of assembly, monomer.

It localises to the cytoplasm. IF-3 binds to the 30S ribosomal subunit and shifts the equilibrium between 70S ribosomes and their 50S and 30S subunits in favor of the free subunits, thus enhancing the availability of 30S subunits on which protein synthesis initiation begins. The chain is Translation initiation factor IF-3 from Borrelia duttonii (strain Ly).